The sequence spans 161 residues: Bifurcating [FeFe] hydrogenase gamma subunit (161 aa).

Residues Cys78, Cys83, Cys119, and Cys123 each contribute to the [2Fe-2S] cluster site.

It belongs to the complex I 24 kDa subunit family. As to quaternary structure, heterotrimer composed of HydA (alpha subunit), HydB (beta subunit) and HydC (gamma subunit). Near neutral and acidic pH conditions favor oligomerization of the heterotrimeric holoenzyme. The cofactor is [2Fe-2S] cluster.

It is found in the cytoplasm. The enzyme catalyses 2 H2 + 2 oxidized [2Fe-2S]-[ferredoxin] + NAD(+) = 2 reduced [2Fe-2S]-[ferredoxin] + NADH + 3 H(+). In terms of biological role, catalyzes the oxidation of the physiological electron carriers NADH and reduced ferredoxin, coupled to the production of H(2). Acts as a bifurcating [FeFe] hydrogenase, which uses the exergonic oxidation of reduced ferredoxin to drive the unfavorable oxidation of NADH to produce H(2). The gamma subunit might be the site where reduced ferredoxin is oxidized. The sequence is that of Bifurcating [FeFe] hydrogenase gamma subunit from Thermotoga maritima (strain ATCC 43589 / DSM 3109 / JCM 10099 / NBRC 100826 / MSB8).